The chain runs to 155 residues: Myosin light chain alkali (155 aa).

2 consecutive EF-hand domains span residues 7–41 (REVE…LNLN) and 80–115 (GCYE…LGES).

As to quaternary structure, myosin is a hexamer of 2 heavy chains and 4 light chains. Indirect flight muscle isoform is found only in the indirect flight muscles. The larval and adult isoform is present in the larval and adult musculature.

This Drosophila melanogaster (Fruit fly) protein is Myosin light chain alkali (Mlc1).